An 880-amino-acid chain; its full sequence is Valine--tRNA ligase (880 aa).

The 'HIGH' region motif lies at 48-58; sequence PNITGKLHLGH. The 'KMSKS' region signature appears at 527–531; that stretch reads KMSKS. K530 is an ATP binding site. Coiled-coil stretches lie at residues 717-741 and 810-880; these read KEEL…AIRN and LFDL…KSLK.

It belongs to the class-I aminoacyl-tRNA synthetase family. ValS type 1 subfamily. In terms of assembly, monomer.

It localises to the cytoplasm. It carries out the reaction tRNA(Val) + L-valine + ATP = L-valyl-tRNA(Val) + AMP + diphosphate. In terms of biological role, catalyzes the attachment of valine to tRNA(Val). As ValRS can inadvertently accommodate and process structurally similar amino acids such as threonine, to avoid such errors, it has a 'posttransfer' editing activity that hydrolyzes mischarged Thr-tRNA(Val) in a tRNA-dependent manner. This chain is Valine--tRNA ligase, found in Clostridium tetani (strain Massachusetts / E88).